The following is a 414-amino-acid chain: Esterase FrsA (414 aa).

The protein belongs to the FrsA family.

The catalysed reaction is a carboxylic ester + H2O = an alcohol + a carboxylate + H(+). Catalyzes the hydrolysis of esters. This chain is Esterase FrsA, found in Shigella sonnei (strain Ss046).